The sequence spans 185 residues: Ribosome-recycling factor (185 aa).

The protein belongs to the RRF family.

The protein resides in the cytoplasm. In terms of biological role, responsible for the release of ribosomes from messenger RNA at the termination of protein biosynthesis. May increase the efficiency of translation by recycling ribosomes from one round of translation to another. The chain is Ribosome-recycling factor from Methylococcus capsulatus (strain ATCC 33009 / NCIMB 11132 / Bath).